The primary structure comprises 1187 residues: Phospholipid-transporting ATPase IH (1187 aa).

The Cytoplasmic segment spans residues 1–61 (MDCSLLRTLV…SSKYTFWNFI (61 aa)). The helical transmembrane segment at 62-82 (PKNLFEQFRRIANFYFLIIFL) threads the bilayer. Over 83-88 (VQLIID) the chain is Extracellular. Residues 89-110 (TPTSPVTSGLPLFFVITVTAIK) form a helical membrane-spanning segment. Over 111–296 (QGYEDWLRHK…SAVEKSMNTF (186 aa)) the chain is Cytoplasmic. Residues 297–318 (LIVYLCILVSKALINTVLKYVW) traverse the membrane as a helical segment. Topologically, residues 319–349 (QSEPFRDEPWYNEKTESERQRNLFLRAFTDF) are extracellular. Residues 350–372 (LAFMVLFNYIIPVSMYVTVEMQK) form a helical membrane-spanning segment. Topologically, residues 373 to 884 (FLGSYFITWD…GHFYYIRISE (512 aa)) are cytoplasmic. D414 (4-aspartylphosphate intermediate) is an active-site residue. Positions 414, 415, 416, 513, 555, 578, 609, 689, 690, and 691 each coordinate ATP. Position 414 (D414) interacts with Mg(2+). T416 is a binding site for Mg(2+). S740 carries the post-translational modification Phosphoserine. The ATP site is built by R801 and K807. Mg(2+) is bound at residue D828. Residues N831 and D832 each contribute to the ATP site. Residue D832 participates in Mg(2+) binding. The chain crosses the membrane as a helical span at residues 885 to 905 (LVQYFFYKNVCFIFPQFLYQF). At 906 to 917 (FCGFSQQTLYDT) the chain is on the extracellular side. The chain crosses the membrane as a helical span at residues 918–937 (AYLTLYNISFTSLPILLYSL). Residues 938–967 (MEQHVGIDVLKRDPTLYRDIAKNALLRWRV) are Cytoplasmic-facing. The chain crosses the membrane as a helical span at residues 968 to 989 (FIYWTFLGVFDALVFFFGAYFI). At 990 to 1003 (FENTTVTINGQMFG) the chain is on the extracellular side. The helical transmembrane segment at 1004 to 1026 (NWTFGTLVFTVMVLTVTLKLALD) threads the bilayer. The Cytoplasmic portion of the chain corresponds to 1027 to 1032 (THYWTW). Residues 1033-1053 (INHFVIWGSLLFYIAFSLLWG) traverse the membrane as a helical segment. Residues 1054-1071 (GVIWPFLSYQRMYYVFIS) lie on the Extracellular side of the membrane. A helical transmembrane segment spans residues 1072-1096 (MLSSGPAWLGIILLVTVGLLPDVLK). The Cytoplasmic segment spans residues 1097–1138 (KVLCRQLWPTATERTQNIQHQDSISEFTPLASLPSWGAQGSR). A phosphoserine mark is found at S1148 and S1158.

Belongs to the cation transport ATPase (P-type) (TC 3.A.3) family. Type IV subfamily. Component of a P4-ATPase flippase complex which consists of a catalytic alpha subunit ATP11A and an accessory beta subunit TMEM30A. Mg(2+) serves as cofactor. Proteolytically cleaved by CASP3. Widely expressed. Expressed in myoblasts. Expressed in retina, brain, liver, testes and kidney (at protein level). Expressed in the inner ear.

Its subcellular location is the cell membrane. It localises to the early endosome. The protein resides in the recycling endosome. The protein localises to the endoplasmic reticulum membrane. The catalysed reaction is ATP + H2O + phospholipidSide 1 = ADP + phosphate + phospholipidSide 2.. It catalyses the reaction a 1,2-diacyl-sn-glycero-3-phospho-L-serine(out) + ATP + H2O = a 1,2-diacyl-sn-glycero-3-phospho-L-serine(in) + ADP + phosphate + H(+). It carries out the reaction a 1,2-diacyl-sn-glycero-3-phosphoethanolamine(out) + ATP + H2O = a 1,2-diacyl-sn-glycero-3-phosphoethanolamine(in) + ADP + phosphate + H(+). Its function is as follows. Catalytic component of a P4-ATPase flippase complex which catalyzes the hydrolysis of ATP coupled to the transport of aminophospholipids, phosphatidylserines (PS) and phosphatidylethanolamines (PE), from the outer to the inner leaflet of the plasma membrane. Does not show flippase activity toward phosphatidylcholine (PC). Contributes to the maintenance of membrane lipid asymmetry with a specific role in morphogenesis of muscle cells. In myoblasts, mediates PS enrichment at the inner leaflet of plasma membrane, triggering PIEZO1-dependent Ca2+ influx and Rho GTPases signal transduction, subsequently leading to the assembly of cortical actomyosin fibers and myotube formation. This Mus musculus (Mouse) protein is Phospholipid-transporting ATPase IH (Atp11a).